We begin with the raw amino-acid sequence, 282 residues long: Acetyl-coenzyme A carboxylase carboxyl transferase subunit beta (282 aa).

In terms of domain architecture, CoA carboxyltransferase N-terminal spans 25–282; sequence VWRKCPHCNE…SQMLRIFMKQ (258 aa). Positions 29, 32, 48, and 51 each coordinate Zn(2+). A C4-type zinc finger spans residues 29-51; that stretch reads CPHCNEIIYAKEIERNLNVCPKC.

The protein belongs to the AccD/PCCB family. As to quaternary structure, acetyl-CoA carboxylase is a heterohexamer composed of biotin carboxyl carrier protein (AccB), biotin carboxylase (AccC) and two subunits each of ACCase subunit alpha (AccA) and ACCase subunit beta (AccD). Zn(2+) is required as a cofactor.

It localises to the cytoplasm. It catalyses the reaction N(6)-carboxybiotinyl-L-lysyl-[protein] + acetyl-CoA = N(6)-biotinyl-L-lysyl-[protein] + malonyl-CoA. Its pathway is lipid metabolism; malonyl-CoA biosynthesis; malonyl-CoA from acetyl-CoA: step 1/1. Functionally, component of the acetyl coenzyme A carboxylase (ACC) complex. Biotin carboxylase (BC) catalyzes the carboxylation of biotin on its carrier protein (BCCP) and then the CO(2) group is transferred by the transcarboxylase to acetyl-CoA to form malonyl-CoA. The protein is Acetyl-coenzyme A carboxylase carboxyl transferase subunit beta of Syntrophotalea carbinolica (strain DSM 2380 / NBRC 103641 / GraBd1) (Pelobacter carbinolicus).